The sequence spans 399 residues: MTSYSYRQSSSTSSFGGMGGGSMRFGAGGAFRAPSIHGGSGGRGVSVSSARFVSSSSGGYGGGYGGALATSDGLLAGNEKLTMQNLNDRLASYLEKVRALEEANGDLEVKIRDWYQKQGPGPARDYSHYFKTIEDLRDQILGATIENSKIVLQIDNARLAADDFRTKFETEQALRMSVEADINGLRRVLDELTLARTDLEMQIEGLKEELAYLKKNHEEEMSVLKGQVGGQVSVEVDSAPGIDLAKILSDMRSQYEVIAEKNRKDAEAWFISQTEELNREVAGHTEQLQISKTEVTDLRRTLQGLEIELQSQLSMKAALEGTLAETEARFGAQLAQIQALISGIEAQLSDVRADTERQNQEYQHLMDIKTRLEQEIATYRNLLEGQDAYFNDLSLAKAL.

The tract at residues 1 to 78 (MTSYSYRQSS…ATSDGLLAGN (78 aa)) is head. The residue at position 7 (Arg7) is an Omega-N-methylarginine. Phosphoserine is present on residues Ser14 and Ser22. An Asymmetric dimethylarginine; alternate modification is found at Arg24. Arg24 bears the Omega-N-methylarginine; alternate mark. Arg32 is modified (omega-N-methylarginine). Phosphoserine is present on residues Ser35 and Ser40. Arg43 and Arg51 each carry omega-N-methylarginine. Residues Ser57 and Ser71 each carry the phosphoserine modification. Positions 79–114 (EKLTMQNLNDRLASYLEKVRALEEANGDLEVKIRDW) are coil 1A. Residues 79–390 (EKLTMQNLND…NLLEGQDAYF (312 aa)) enclose the IF rod domain. Residues 115–132 (YQKQGPGPARDYSHYFKT) are linker 1. Residues 133–224 (IEDLRDQILG…KNHEEEMSVL (92 aa)) form a coil 1B region. The interval 225–247 (KGQVGGQVSVEVDSAPGIDLAKI) is linker 12. Residues 243-389 (DLAKILSDMR…RNLLEGQDAY (147 aa)) are necessary for interaction with PNN. The segment at 248–386 (LSDMRSQYEV…ATYRNLLEGQ (139 aa)) is coil 2. A Phosphothreonine modification is found at Thr322. A rod-like helical tail region spans residues 387-399 (DAYFNDLSLAKAL). Ser394 carries the post-translational modification Phosphoserine.

The protein belongs to the intermediate filament family. Heterotetramer of two type I and two type II keratins. Interacts with PNN and the actin-binding domain of DMD.

In terms of biological role, involved in the organization of myofibers. Together with KRT8, helps to link the contractile apparatus to dystrophin at the costameres of striated muscle. This chain is Keratin, type I cytoskeletal 19 (KRT19), found in Bos taurus (Bovine).